Here is a 974-residue protein sequence, read N- to C-terminus: Kinase-interacting protein 1 (974 aa).

Residues 10–90 (YSWWAASHIR…ERYDHLSKEL (81 aa)) enclose the NAB domain. The tract at residues 151-170 (STASKQKQGKQSSKIEDAAK) is disordered. A coiled-coil region spans residues 173–423 (LSKNEAIEEI…DVVNQNSCLR (251 aa)). The disordered stretch occupies residues 586-614 (AQPTPAEKGDEKVSAQSGNTSVYETHTQK). A compositionally biased stretch (polar residues) spans 599–610 (SAQSGNTSVYET). Positions 641 to 697 (NEYTAILKNYKEVTKKLSDIEKKDRDTEFELTLQTRELKSAIAKRDEEIHNLRQKLS) form a coiled coil. Residues 714-740 (LLDPSDPSSARGLKPEDLPQIKDGDDE) form a disordered region. Residues 726-736 (LKPEDLPQIKD) show a composition bias toward basic and acidic residues. Coiled coils occupy residues 784-807 (HQIQ…RDKE) and 882-905 (AAKF…ELEA).

In terms of assembly, homodimer or homooligomer. Interacts with PRK1. Post-translationally, phosphorylated by PRK1. As to expression, expressed in mature pollen grains and pollen tubes, but not in style, ovary, petal, leaf, root or sepal.

The protein resides in the cytoplasm. Functionally, probably involved in the receptor-like kinase-mediated signal transduction pathway. In Petunia integrifolia (Violet-flowered petunia), this protein is Kinase-interacting protein 1.